A 185-amino-acid chain; its full sequence is Ribosome-recycling factor (185 aa).

It belongs to the RRF family.

The protein resides in the cytoplasm. Functionally, responsible for the release of ribosomes from messenger RNA at the termination of protein biosynthesis. May increase the efficiency of translation by recycling ribosomes from one round of translation to another. The polypeptide is Ribosome-recycling factor (Nitrosospira multiformis (strain ATCC 25196 / NCIMB 11849 / C 71)).